A 278-amino-acid polypeptide reads, in one-letter code: Dermonecrotic toxin LbSicTox-betaIA1a (278 aa).

H12 is a catalytic residue. Residues E32 and D34 each coordinate Mg(2+). Catalysis depends on H48, which acts as the Nucleophile. Intrachain disulfides connect C52/C58 and C54/C197. D92 contacts Mg(2+). A glycan (N-linked (GlcNAc...) asparagine) is linked at N258.

Belongs to the arthropod phospholipase D family. Class II subfamily. Class IIb sub-subfamily. As to expression, expressed by the venom gland.

It localises to the secreted. It catalyses the reaction an N-(acyl)-sphingosylphosphoethanolamine = an N-(acyl)-sphingosyl-1,3-cyclic phosphate + ethanolamine. It carries out the reaction a 1-acyl-sn-glycero-3-phosphocholine = a 1-acyl-sn-glycero-2,3-cyclic phosphate + choline. The catalysed reaction is a 1-acyl-sn-glycero-3-phosphoethanolamine = a 1-acyl-sn-glycero-2,3-cyclic phosphate + ethanolamine. In terms of biological role, this toxin does not show activity on sphingomyelin (SM) and does not show dermonecrotic activities. This toxin is a member of dermonecrotic toxins that cleave the phosphodiester linkage between the phosphate and headgroup of certain phospholipids (sphingolipid and lysolipid substrates), forming an alcohol (often choline) and a cyclic phosphate. It may act on ceramide phosphoethanolamine (CPE), lysophosphatidylcholine (LPC) and lysophosphatidylethanolamine (LPE), but not on lysophosphatidylserine (LPS), and lysophosphatidylglycerol (LPG). It may act by transphosphatidylation, releasing exclusively cyclic phosphate products as second products. The chain is Dermonecrotic toxin LbSicTox-betaIA1a from Loxosceles boneti (North American fiddleback spider).